Here is a 1108-residue protein sequence, read N- to C-terminus: MSIATTPIETPKSPKSTEPQVRKRKKVSTVCTNCRKRKIRCDRQHPCNNCIKSKKHNACVYDDGQVSPANFSTNGSSHGNTVPESRPYEESARIPIRFDAEAPRKKSKPNTPNNERKNSKKSPDNTVANNQQTASENEVTITLSELNMLKQRLQNIEANINAQSNPQSNPSYVPQTPAYPTQPNILPPPVSFNSWSPKQSNERVMFSPQQRLTTNYNVSHTRGQSPSIQLPPLSFKDTPRASIDSAPLYSEMSPPRSDLIASSLTSPESIQMSVSGDVVGVNPYLNETETINFYDGYTSICVRDFRRVNHGPFAWSSLMRKDKALSSLWNHILKKKEKKNVASQTFVFGQDVHEISQENTQLVASESNESETKFKKKTLETFGFNDVVPYDILKKKLQTQINKTTSPLGLTLYEEQVNMELQLVDRIHQQLPKKKVLWKLIDRFFSLLYPFMPFLDEIDFRESVTKIIGETEYKDEKIKELKVEKRLDLAVIGVLLIILRMSYLSLFCNKESVNEMRLKTTDPSPEAQDMKYLLQNPIGISLIDSAQNCLQYFDIFRKTSMPVLQCAYFLQLYHIFAPEDGDDGDGADTYALNSMVVRMAYSMGLNREPDNFKDVLNDKRQNHLGRKIWHFLVIGDVHNSYAFGTPKLIGDDFYDTKVPFIEEGNENLIDKSLDQYVTKSVFPGYFSIYNSVDQILKLILSVSRRSKVSEICKILNQFEIGIAEQYGTLSDCLKPKENLIHIFARNMPVKMYISLKSFLVSVYFHLFLYYEHKNDSLSFFYLRKILKTGAGDIMPHYFELLGNSEVVCDMVINPKLIQIIHKANQINIALIIRVNMSIYRMKNSQHHAENCKKDDFYYSYYKELCKFSSCLTRCAEVGIAAVSKLSTRYYYAWKITKGHNFLLKTITSMEFYEKESTNAQEITLPKYKLEQIADLENICEVALNKLGKTSVMGDEFCSNVNYKKYKGDQTYSTSSESSSTPNKDSPLDSRKYTNDFGLDLVNNQEIDKIWLQMLSLKSEEAQQQRQQESQPFTSSQSQSQSPLTSANQGYMPRPESRRGSYYGNTPFALENLNFDGFGGQSKSSNNGEADLSSFDFFVDLPFDQLFTN.

Residues 1 to 19 (MSIATTPIETPKSPKSTEP) are compositionally biased toward polar residues. Positions 1–27 (MSIATTPIETPKSPKSTEPQVRKRKKV) are disordered. Positions 31–59 (CTNCRKRKIRCDRQHPCNNCIKSKKHNAC) form a DNA-binding region, zn(2)-C6 fungal-type. The span at 68 to 83 (PANFSTNGSSHGNTVP) shows a compositional bias: polar residues. Disordered regions lie at residues 68–138 (PANF…SENE), 968–990 (DQTY…LDSR), and 1021–1064 (AQQQ…YYGN). Basic and acidic residues-rich tracts occupy residues 86–104 (RPYE…EAPR) and 114–123 (NERKNSKKSP). Residues 124 to 138 (DNTVANNQQTASENE) show a composition bias toward polar residues. Residues 134 to 165 (ASENEVTITLSELNMLKQRLQNIEANINAQSN) are a coiled coil. Composition is skewed to low complexity over residues 970–980 (TYSTSSESSST) and 1023–1041 (QQRQ…QSQS).

It localises to the nucleus. Transcription factor that acts as the central regulator of the MDR1 efflux pump. Other target genes include those encoding oxidoreductases, whose up-regulation in fluconazole-resistant isolates may help to prevent cell damage resulting from the generation of toxic molecules in the presence of fluconazole and thereby contribute to drug resistance. The sequence is that of Multidrug resistance regulator 1 from Candida albicans (strain SC5314 / ATCC MYA-2876) (Yeast).